The chain runs to 354 residues: Glutamine synthetase (354 aa).

One can recognise a GS beta-grasp domain in the interval 22–101 (IQAEYVWVDG…VLAETYNSDG (80 aa)). The GS catalytic domain occupies 108-354 (FRHHAAKVME…IIVETTLLNA (247 aa)).

The protein belongs to the glutamine synthetase family. Homooctamer.

The protein localises to the cytoplasm. It carries out the reaction L-glutamate + NH4(+) + ATP = L-glutamine + ADP + phosphate + H(+). This chain is Glutamine synthetase (GLN1), found in Hebeloma cylindrosporum.